The sequence spans 94 residues: Aspartyl/glutamyl-tRNA(Asn/Gln) amidotransferase subunit C (94 aa).

It belongs to the GatC family. As to quaternary structure, heterotrimer of A, B and C subunits.

It carries out the reaction L-glutamyl-tRNA(Gln) + L-glutamine + ATP + H2O = L-glutaminyl-tRNA(Gln) + L-glutamate + ADP + phosphate + H(+). The catalysed reaction is L-aspartyl-tRNA(Asn) + L-glutamine + ATP + H2O = L-asparaginyl-tRNA(Asn) + L-glutamate + ADP + phosphate + 2 H(+). Allows the formation of correctly charged Asn-tRNA(Asn) or Gln-tRNA(Gln) through the transamidation of misacylated Asp-tRNA(Asn) or Glu-tRNA(Gln) in organisms which lack either or both of asparaginyl-tRNA or glutaminyl-tRNA synthetases. The reaction takes place in the presence of glutamine and ATP through an activated phospho-Asp-tRNA(Asn) or phospho-Glu-tRNA(Gln). The chain is Aspartyl/glutamyl-tRNA(Asn/Gln) amidotransferase subunit C from Solidesulfovibrio magneticus (strain ATCC 700980 / DSM 13731 / RS-1) (Desulfovibrio magneticus).